The following is an 87-amino-acid chain: UPF0235 protein TGRD_618 (87 aa).

The protein belongs to the UPF0235 family.

This Endomicrobium trichonymphae protein is UPF0235 protein TGRD_618.